A 473-amino-acid chain; its full sequence is Photosystem II CP43 reaction center protein (473 aa).

Residues 1–14 (MKTLYSLRRFYHVE) constitute a propeptide that is removed on maturation. An N-acetylthreonine modification is found at T15. T15 carries the phosphothreonine modification. 5 consecutive transmembrane segments (helical) span residues 69–93 (LFEV…PHLA), 134–155 (LLGP…KDRN), 178–200 (KALY…RKIT), 255–275 (KPFA…LSYS), and 291–312 (WFNN…ASQA). Position 367 (E367) interacts with [CaMn4O5] cluster. The helical transmembrane segment at 447 to 471 (RARAAAAGFEKGIDRDFEPVLSMTP) threads the bilayer.

This sequence belongs to the PsbB/PsbC family. PsbC subfamily. As to quaternary structure, PSII is composed of 1 copy each of membrane proteins PsbA, PsbB, PsbC, PsbD, PsbE, PsbF, PsbH, PsbI, PsbJ, PsbK, PsbL, PsbM, PsbT, PsbX, PsbY, PsbZ, Psb30/Ycf12, at least 3 peripheral proteins of the oxygen-evolving complex and a large number of cofactors. It forms dimeric complexes. The cofactor is Binds multiple chlorophylls and provides some of the ligands for the Ca-4Mn-5O cluster of the oxygen-evolving complex. It may also provide a ligand for a Cl- that is required for oxygen evolution. PSII binds additional chlorophylls, carotenoids and specific lipids..

It is found in the plastid. Its subcellular location is the chloroplast thylakoid membrane. Its function is as follows. One of the components of the core complex of photosystem II (PSII). It binds chlorophyll and helps catalyze the primary light-induced photochemical processes of PSII. PSII is a light-driven water:plastoquinone oxidoreductase, using light energy to abstract electrons from H(2)O, generating O(2) and a proton gradient subsequently used for ATP formation. The polypeptide is Photosystem II CP43 reaction center protein (Chloranthus spicatus (Chulantree)).